A 110-amino-acid chain; its full sequence is Ferredoxin (110 aa).

2 consecutive 4Fe-4S ferredoxin-type domains span residues 2-30 (TYIV…YEGE) and 31-60 (FMLV…PESP). Residues Cys9 and Cys17 each coordinate [3Fe-4S] cluster. [4Fe-4S] cluster is bound by residues Cys21, Cys40, Cys43, and Cys46. Cys50 is a binding site for [3Fe-4S] cluster.

The cofactor is [4Fe-4S] cluster. Requires [3Fe-4S] cluster as cofactor.

Ferredoxins are iron-sulfur proteins that transfer electrons in a wide variety of metabolic reactions. This Rickettsia typhi (strain ATCC VR-144 / Wilmington) protein is Ferredoxin (fdxA).